The chain runs to 526 residues: Peptide chain release factor 3 (526 aa).

The tr-type G domain occupies Asn8–Gln277. Residues Ser17–Thr24, Asp85–His89, and Asn139–Asp142 each bind GTP.

The protein belongs to the TRAFAC class translation factor GTPase superfamily. Classic translation factor GTPase family. PrfC subfamily.

It localises to the cytoplasm. Increases the formation of ribosomal termination complexes and stimulates activities of RF-1 and RF-2. It binds guanine nucleotides and has strong preference for UGA stop codons. It may interact directly with the ribosome. The stimulation of RF-1 and RF-2 is significantly reduced by GTP and GDP, but not by GMP. The chain is Peptide chain release factor 3 from Actinobacillus pleuropneumoniae serotype 7 (strain AP76).